Here is a 108-residue protein sequence, read N- to C-terminus: Anti-sigma-B factor antagonist (108 aa).

The STAS domain maps to 3–108 (LNIETITHDD…MHVNEGTEVE (106 aa)). Phosphoserine is present on serine 57.

Belongs to the anti-sigma-factor antagonist family. In terms of processing, phosphorylated by RsbW on a serine residue.

Its function is as follows. Positive regulator of sigma-B activity. Non-phosphorylated RsbV binds to RsbW, preventing its association with sigma-B. When phosphorylated, releases RsbW, which is then free to complex with and inactivate sigma-B. The protein is Anti-sigma-B factor antagonist (rsbV) of Staphylococcus epidermidis.